Reading from the N-terminus, the 265-residue chain is Dehydrin COR47 (265 aa).

Over residues 1 to 14 (MAEEYKNNVPEHET) the composition is skewed to basic and acidic residues. Residues 1-265 (MAEEYKNNVP…EVKKEKESDD (265 aa)) are disordered. Ala-2 is subject to N-acetylalanine. Residues 16 to 28 (TVATEESPATTTE) are compositionally biased toward polar residues. Positions 29–47 (VTDRGLFDFLGKKEEEVKP) are enriched in basic and acidic residues. Ser-64 carries the phosphoserine modification. Residues 69–79 (AAEHEEVKENK) are compositionally biased toward basic and acidic residues. The residue at position 90 (Thr-90) is a Phosphothreonine. 2 stretches are compositionally biased toward basic and acidic residues: residues 96–105 (NKPSVIEKLH) and 129–156 (IVEG…KTAE). Repeat unit 1 spans residues 133-153 (EEDKKGLVEKIKEKLPGHHDK). The tract at residues 133 to 251 (EEDKKGLVEK…KEKLPGYHAK (119 aa)) is 3 X 21 AA repeats, Lys-rich. The segment covering 160–172 (PVSTTIPVPVSES) has biased composition (low complexity). Basic and acidic residues-rich tracts occupy residues 173–204 (VVEH…KAED) and 227–265 (PVEH…ESDD). 2 repeat units span residues 180 to 200 (EEEK…HHDE) and 231 to 251 (PEEK…YHAK).

Belongs to the plant dehydrin family.

This chain is Dehydrin COR47 (COR47), found in Arabidopsis thaliana (Mouse-ear cress).